Consider the following 38-residue polypeptide: Cytochrome b6-f complex subunit 5 (38 aa).

The helical transmembrane segment at 5-25 (LLLGIVLGLIPVTLAGLFVAA) threads the bilayer.

Belongs to the PetG family. In terms of assembly, the 4 large subunits of the cytochrome b6-f complex are cytochrome b6, subunit IV (17 kDa polypeptide, PetD), cytochrome f and the Rieske protein, while the 4 small subunits are PetG, PetL, PetM and PetN. The complex functions as a dimer.

The protein localises to the cellular thylakoid membrane. Component of the cytochrome b6-f complex, which mediates electron transfer between photosystem II (PSII) and photosystem I (PSI), cyclic electron flow around PSI, and state transitions. PetG is required for either the stability or assembly of the cytochrome b6-f complex. The sequence is that of Cytochrome b6-f complex subunit 5 from Synechocystis sp. (strain ATCC 27184 / PCC 6803 / Kazusa).